We begin with the raw amino-acid sequence, 336 residues long: Galactose/methyl galactoside import permease protein MglC (336 aa).

9 consecutive transmembrane segments (helical) span residues 17 to 37 (GIYVVLLVLLAIIIFQDPTFL), 53 to 73 (IIIALGVAGLIVTQGTDLSAG), 107 to 127 (LVILIVCAIGAVIGLVNGIII), 128 to 148 (AYLNVTPFITTLGTMIIVYGI), 181 to 201 (FRLSYITFYALIAVAFVWVLW), 227 to 247 (VALNLLMIYALSGVFYAFGGL), 257 to 277 (TNNLGFMYELDAIAACVVGGV), 279 to 299 (FSGGVGTVFGVVTGVIIFTVI), and 306 to 326 (IGVNPYWQYIIKGGIIIFAVA).

Belongs to the binding-protein-dependent transport system permease family. AraH/RbsC subfamily. As to quaternary structure, the complex is composed of one ATP-binding protein (MglA), two transmembrane proteins (MglC) and a solute-binding protein (MglB).

It is found in the cell inner membrane. In terms of biological role, part of the ABC transporter complex MglABC involved in galactose/methyl galactoside import. Probably responsible for the translocation of the substrate across the membrane. The protein is Galactose/methyl galactoside import permease protein MglC (mglC) of Salmonella typhimurium (strain LT2 / SGSC1412 / ATCC 700720).